Here is a 1794-residue protein sequence, read N- to C-terminus: Non-reducing polyketide synthase nscA (1794 aa).

Residues 19-256 form an N-terminal acylcarrier protein transacylase domain (SAT) region; sequence DLKDLFRRLH…PLPVYDGLCH (238 aa). Positions 389-822 constitute a Ketosynthase family 3 (KS3) domain; that stretch reads ASKLAIVGMA…GGNTTVLLED (434 aa). The disordered stretch occupies residues 427–448; it reads PDRFDLNTHYDPTGKTENATQT. The segment covering 428–440 has biased composition (basic and acidic residues); that stretch reads DRFDLNTHYDPTG. Active-site for beta-ketoacyl synthase activity residues include cysteine 562, histidine 697, and histidine 740. Positions 928–1249 are malonyl-CoA:ACP transacylase (MAT) domain; the sequence is FTGQGAYYSG…LVTLHLAGLT (322 aa). The segment at 1314–1633 is product template (PT) domain; sequence TSLVHQITAE…RLLMDRFFSP (320 aa). Residues 1318 to 1454 are N-terminal hotdog fold; the sequence is HQITAETVEA…GVVRFEDPAA (137 aa). A PKS/mFAS DH domain is found at 1318-1628; sequence HQITAETVEA…FRRVPRLLMD (311 aa). Residue histidine 1350 is the Proton acceptor; for dehydratase activity of the active site. A C-terminal hotdog fold region spans residues 1482–1628; that stretch reads ASKLSKPLAY…FRRVPRLLMD (147 aa). Aspartate 1539 serves as the catalytic Proton donor; for dehydratase activity. Disordered regions lie at residues 1637 to 1665 and 1682 to 1718; these read SHAE…EAPA and ASKS…GDPV. 2 stretches are compositionally biased toward polar residues: residues 1644–1655 and 1685–1701; these read QETAPSATSVKK and SEVS…QESP. In terms of domain architecture, Carrier spans 1717 to 1794; that stretch reads PVDAGVVGQC…EMTAWLEEYC (78 aa). An O-(pantetheine 4'-phosphoryl)serine modification is found at serine 1754.

The cofactor is pantetheine 4'-phosphate.

Its pathway is secondary metabolite biosynthesis. In terms of biological role, non-reducing polyketide synthase; part of the gene cluster that mediates the biosynthesis of neosartoricin, a prenylated anthracenone that exhibits T-cell antiproliferative activity, suggestive of a physiological role as an immunosuppressive agent. The non-reducing polyketide synthase nscA probably synthesizes and cyclizes the decaketide backbone. The hydrolase nscB then mediates the product release through hydrolysis followed by spontaneous decarboxylation. The prenyltransferase nscD catalyzes the addition of the dimethylallyl group to the aromatic C5. The FAD-dependent monooxygenase nscC is then responsible for the stereospecific hydroxylation at C2. There is no gene encoding O-acetyltransferase in the nsc gene cluster; thus, the last step of 2-O-acetylation leading to neosartoricin may be catalyzed by an unidentified O-acetyltransferase. In Neosartorya fischeri (strain ATCC 1020 / DSM 3700 / CBS 544.65 / FGSC A1164 / JCM 1740 / NRRL 181 / WB 181) (Aspergillus fischerianus), this protein is Non-reducing polyketide synthase nscA.